Reading from the N-terminus, the 72-residue chain is MIIPWQGLAPDTLDNLIESFVLREGTDYGEHERSLEQKVADVKLQLQSGEAVLVWSELHETVNIMPKKQFRE.

It belongs to the UPF0270 family.

This Salmonella dublin (strain CT_02021853) protein is UPF0270 protein YheU.